The following is a 551-amino-acid chain: Pentatricopeptide repeat-containing protein At3g13150 (551 aa).

The tract at residues 22-67 (ATAKSAKPRSQTKSTKFPSKLKASTASVGDGGQSSNDAKDSKNSKL) is disordered. Positions 29 to 48 (PRSQTKSTKFPSKLKASTAS) are enriched in polar residues. Basic and acidic residues predominate over residues 58-67 (DAKDSKNSKL). 7 PPR repeats span residues 121 to 155 (SEDF…NCER), 156 to 191 (TVKS…GITP), 192 to 226 (DLVT…GFEP), 227 to 261 (DLIS…NLSP), 262 to 296 (NIRS…GISP), 297 to 331 (DVHT…GLTP), and 332 to 366 (DTVT…KLLS). Disordered stretches follow at residues 409 to 435 (GKKK…SPDT) and 449 to 551 (SSSD…LLDD). A compositionally biased stretch (low complexity) spans 415–435 (SSPVSSSAKTTSTPVSSSPDT).

It belongs to the PPR family. P subfamily.

This Arabidopsis thaliana (Mouse-ear cress) protein is Pentatricopeptide repeat-containing protein At3g13150.